The following is a 446-amino-acid chain: Trigger factor (446 aa).

In terms of domain architecture, PPIase FKBP-type spans Gly-161 to Pro-246. Residues Val-422–Glu-446 form a disordered region. The span at Gln-437–Glu-446 shows a compositional bias: acidic residues.

It belongs to the FKBP-type PPIase family. Tig subfamily.

The protein localises to the cytoplasm. The catalysed reaction is [protein]-peptidylproline (omega=180) = [protein]-peptidylproline (omega=0). Its function is as follows. Involved in protein export. Acts as a chaperone by maintaining the newly synthesized protein in an open conformation. Functions as a peptidyl-prolyl cis-trans isomerase. The protein is Trigger factor of Hahella chejuensis (strain KCTC 2396).